The chain runs to 311 residues: Tyrosine recombinase XerD (311 aa).

The Core-binding (CB) domain occupies Lys-2 to Ala-95. A Tyr recombinase domain is found at Arg-116–Ala-304. Active-site residues include Arg-160, Lys-184, His-256, Arg-259, and His-282. The active-site O-(3'-phospho-DNA)-tyrosine intermediate is the Tyr-291.

Belongs to the 'phage' integrase family. XerD subfamily. Forms a cyclic heterotetrameric complex composed of two molecules of XerC and two molecules of XerD.

The protein resides in the cytoplasm. Its function is as follows. Site-specific tyrosine recombinase, which acts by catalyzing the cutting and rejoining of the recombining DNA molecules. The XerC-XerD complex is essential to convert dimers of the bacterial chromosome into monomers to permit their segregation at cell division. It also contributes to the segregational stability of plasmids. The chain is Tyrosine recombinase XerD from Mycobacterium tuberculosis (strain CDC 1551 / Oshkosh).